Consider the following 97-residue polypeptide: MSKITAKDVRKVAQLARLDLPDDQIATYTEQLEKILAYVAQLEEIDTTNVKPTTRAVEVVNVTRTDEVSATPVREELLNLAPQREGDFFRVPKILAE.

This sequence belongs to the GatC family. In terms of assembly, heterotrimer of A, B and C subunits.

It carries out the reaction L-glutamyl-tRNA(Gln) + L-glutamine + ATP + H2O = L-glutaminyl-tRNA(Gln) + L-glutamate + ADP + phosphate + H(+). The catalysed reaction is L-aspartyl-tRNA(Asn) + L-glutamine + ATP + H2O = L-asparaginyl-tRNA(Asn) + L-glutamate + ADP + phosphate + 2 H(+). Its function is as follows. Allows the formation of correctly charged Asn-tRNA(Asn) or Gln-tRNA(Gln) through the transamidation of misacylated Asp-tRNA(Asn) or Glu-tRNA(Gln) in organisms which lack either or both of asparaginyl-tRNA or glutaminyl-tRNA synthetases. The reaction takes place in the presence of glutamine and ATP through an activated phospho-Asp-tRNA(Asn) or phospho-Glu-tRNA(Gln). This Prochlorococcus marinus (strain MIT 9303) protein is Aspartyl/glutamyl-tRNA(Asn/Gln) amidotransferase subunit C.